A 355-amino-acid polypeptide reads, in one-letter code: Ribosomal RNA small subunit methyltransferase H (355 aa).

S-adenosyl-L-methionine is bound by residues 55 to 57 (GGH), D75, D122, and Q129. Positions 327-355 (ERTSQPLPATGAEDFVPAVPGAAEKGRRR) are disordered.

The protein belongs to the methyltransferase superfamily. RsmH family.

The protein localises to the cytoplasm. The catalysed reaction is cytidine(1402) in 16S rRNA + S-adenosyl-L-methionine = N(4)-methylcytidine(1402) in 16S rRNA + S-adenosyl-L-homocysteine + H(+). Functionally, specifically methylates the N4 position of cytidine in position 1402 (C1402) of 16S rRNA. This is Ribosomal RNA small subunit methyltransferase H from Bordetella avium (strain 197N).